Here is a 307-residue protein sequence, read N- to C-terminus: UPF0276 protein HI_1600 (307 aa).

This sequence belongs to the UPF0276 family.

The sequence is that of UPF0276 protein HI_1600 from Haemophilus influenzae (strain ATCC 51907 / DSM 11121 / KW20 / Rd).